The following is a 445-amino-acid chain: Probable glycine dehydrogenase (decarboxylating) subunit 1 (445 aa).

The protein belongs to the GcvP family. N-terminal subunit subfamily. In terms of assembly, the glycine cleavage system is composed of four proteins: P, T, L and H. In this organism, the P 'protein' is a heterodimer of two subunits.

The catalysed reaction is N(6)-[(R)-lipoyl]-L-lysyl-[glycine-cleavage complex H protein] + glycine + H(+) = N(6)-[(R)-S(8)-aminomethyldihydrolipoyl]-L-lysyl-[glycine-cleavage complex H protein] + CO2. The glycine cleavage system catalyzes the degradation of glycine. The P protein binds the alpha-amino group of glycine through its pyridoxal phosphate cofactor; CO(2) is released and the remaining methylamine moiety is then transferred to the lipoamide cofactor of the H protein. The chain is Probable glycine dehydrogenase (decarboxylating) subunit 1 from Anaeromyxobacter dehalogenans (strain 2CP-1 / ATCC BAA-258).